A 423-amino-acid chain; its full sequence is MKLLVIGNGGREHALAWKLAQSPKVETVFVAPGNAGTAIEPKLQNIDLTAHQDLIEFCRKENIVFTVVGPEAPLAAGIVDDFRAAGLKIFGPTQYAAQLESSKDFAKAFMAKYNIPTAQYQTFENADAAHDYVNQKGAPIVIKADGLAAGKGVIVAMTLDEAHAAIDDMLLDNKMGNAGARVVIEDFLQGEEASFIVMVDGNNVLPMATSQDHKRLLDGDKGLNTGGMGAYSPAPVVTPVVYERAMNEIILPTVAGMKAEGHEFTGFLYAGLMIDQSGAPYTIEFNCRFGDPETQPIMSRLNSDLSDLVEAAIDGKLDSVTAEWSPQTAVGVVLAAQNYPETPKKGDIISGLDAANQIGKVFHAGTTANEKGDVLTNGGRVLCVVGLGDNVAQAKAKAYGALEKISFDGMQYRKDIADKAINR.

In terms of domain architecture, ATP-grasp spans 107-314; the sequence is KAFMAKYNIP…LSDLVEAAID (208 aa). 133–194 contacts ATP; that stretch reads VNQKGAPIVI…EDFLQGEEAS (62 aa). Residues Glu284 and Asn286 each contribute to the Mg(2+) site.

The protein belongs to the GARS family. Mg(2+) is required as a cofactor. Mn(2+) serves as cofactor.

It catalyses the reaction 5-phospho-beta-D-ribosylamine + glycine + ATP = N(1)-(5-phospho-beta-D-ribosyl)glycinamide + ADP + phosphate + H(+). The protein operates within purine metabolism; IMP biosynthesis via de novo pathway; N(1)-(5-phospho-D-ribosyl)glycinamide from 5-phospho-alpha-D-ribose 1-diphosphate: step 2/2. The protein is Phosphoribosylamine--glycine ligase of Neisseria meningitidis serogroup B (strain ATCC BAA-335 / MC58).